The sequence spans 296 residues: 4-amino-4-deoxyprephenate dehydrogenase (296 aa).

The 280-residue stretch at 9–288 folds into the Prephenate/arogenate dehydrogenase domain; the sequence is RCVVVGGAGA…EHGAELERLC (280 aa).

This sequence belongs to the prephenate/arogenate dehydrogenase family.

It catalyses the reaction 4-amino-4-deoxyprephenate + NAD(+) = 3-(4-aminophenyl)pyruvate + CO2 + NADH + H(+). The protein operates within antibiotic biosynthesis. In terms of biological role, involved in pristinamycin I biosynthesis. Probably catalyzes the formation of 3-(4-aminophenyl)pyruvate from 4-amino-4-deoxyprephenate. This chain is 4-amino-4-deoxyprephenate dehydrogenase, found in Streptomyces pristinaespiralis.